Reading from the N-terminus, the 382-residue chain is Nitric oxide reductase FlRd-NAD(+) reductase (382 aa).

The protein belongs to the FAD-dependent oxidoreductase family. FAD serves as cofactor.

Its subcellular location is the cytoplasm. It carries out the reaction 2 reduced [nitric oxide reductase rubredoxin domain] + NAD(+) + H(+) = 2 oxidized [nitric oxide reductase rubredoxin domain] + NADH. It functions in the pathway nitrogen metabolism; nitric oxide reduction. Its function is as follows. One of at least two accessory proteins for anaerobic nitric oxide (NO) reductase. Reduces the rubredoxin moiety of NO reductase. The sequence is that of Nitric oxide reductase FlRd-NAD(+) reductase from Vibrio vulnificus (strain CMCP6).